A 266-amino-acid chain; its full sequence is 3-methyl-2-oxobutanoate hydroxymethyltransferase 2 (266 aa).

Residues D45 and D84 each contribute to the Mg(2+) site. Residues 45–46 (DS), D84, and K112 each bind 3-methyl-2-oxobutanoate. Mg(2+) is bound at residue E114. E181 functions as the Proton acceptor in the catalytic mechanism.

Belongs to the PanB family. Homodecamer; pentamer of dimers. Requires Mg(2+) as cofactor.

It is found in the cytoplasm. The catalysed reaction is 3-methyl-2-oxobutanoate + (6R)-5,10-methylene-5,6,7,8-tetrahydrofolate + H2O = 2-dehydropantoate + (6S)-5,6,7,8-tetrahydrofolate. It functions in the pathway cofactor biosynthesis; (R)-pantothenate biosynthesis; (R)-pantoate from 3-methyl-2-oxobutanoate: step 1/2. Functionally, catalyzes the reversible reaction in which hydroxymethyl group from 5,10-methylenetetrahydrofolate is transferred onto alpha-ketoisovalerate to form ketopantoate. The polypeptide is 3-methyl-2-oxobutanoate hydroxymethyltransferase 2 (Pseudomonas entomophila (strain L48)).